The following is a 307-amino-acid chain: Glycine--tRNA ligase alpha subunit (307 aa).

This sequence belongs to the class-II aminoacyl-tRNA synthetase family. In terms of assembly, tetramer of two alpha and two beta subunits.

It is found in the cytoplasm. The enzyme catalyses tRNA(Gly) + glycine + ATP = glycyl-tRNA(Gly) + AMP + diphosphate. This chain is Glycine--tRNA ligase alpha subunit, found in Xylella fastidiosa (strain M23).